The sequence spans 128 residues: Translation initiation factor 5A (128 aa).

Lys-35 carries the post-translational modification Hypusine.

This sequence belongs to the eIF-5A family.

It localises to the cytoplasm. Functions by promoting the formation of the first peptide bond. The protein is Translation initiation factor 5A (eIF5A) of Methanocella arvoryzae (strain DSM 22066 / NBRC 105507 / MRE50).